A 108-amino-acid polypeptide reads, in one-letter code: Tubulin-specific chaperone A (108 aa).

At alanine 2 the chain carries N-acetylalanine.

It belongs to the TBCA family. As to quaternary structure, supercomplex made of cofactors A to E. Cofactors A and D function by capturing and stabilizing tubulin in a quasi-native conformation. Cofactor E binds to the cofactor D-tubulin complex; interaction with cofactor C then causes the release of tubulin polypeptides that are committed to the native state.

The protein localises to the cytoplasm. Its subcellular location is the cytoskeleton. In terms of biological role, tubulin-folding protein; involved in the early step of the tubulin folding pathway. This is Tubulin-specific chaperone A (TBCA) from Homo sapiens (Human).